A 212-amino-acid chain; its full sequence is MAKLLVIKASMVDKSISFSEELTNRFVKYYLESNPNDEVITLDLNEVPMAQKTLNGSNLKNFFNQEDSDFYIDQLKSVHKVIFSCPMTNFNISATAKNYLDHVLVANKTFSYKYSKKGDAIGLLNHLSVQLLTTQGAPLGWYPWGNHTENLKGTFEFMGTKVVTPILVDGTKIPENANKTPVERINEFDSVIRLKAKEFAALPAVDWKPLEQ.

FMN-binding positions include Ser10 and 17–19 (SFS).

It belongs to the azoreductase type 1 family. In terms of assembly, homodimer. The cofactor is FMN.

It catalyses the reaction 2 a quinone + NADH + H(+) = 2 a 1,4-benzosemiquinone + NAD(+). It carries out the reaction N,N-dimethyl-1,4-phenylenediamine + anthranilate + 2 NAD(+) = 2-(4-dimethylaminophenyl)diazenylbenzoate + 2 NADH + 2 H(+). Quinone reductase that provides resistance to thiol-specific stress caused by electrophilic quinones. In terms of biological role, also exhibits azoreductase activity. Catalyzes the reductive cleavage of the azo bond in aromatic azo compounds to the corresponding amines. The protein is FMN-dependent NADH:quinone oxidoreductase of Malacoplasma penetrans (strain HF-2) (Mycoplasma penetrans).